Consider the following 457-residue polypeptide: PDZ and LIM domain protein 7 (457 aa).

Residues 1-85 form the PDZ domain; that stretch reads MDSFKVVLEG…RLSLGLSRAQ (85 aa). Serine 78 is subject to Phosphoserine. 2 disordered regions span residues 81–132 and 186–226; these read LSRA…LSQN and FMKK…PWAV. Threonine 96 carries the phosphothreonine modification. Arginine 103 is modified (asymmetric dimethylarginine). Position 111 is a phosphoserine (serine 111). Position 247 is a phosphoserine (serine 247). 3 consecutive LIM zinc-binding domains span residues 280–338, 339–398, and 399–457; these read PVCH…VRYA, PSCA…MFGT, and KCRG…FSHV.

As to quaternary structure, binds via its LIM zinc-binding 3 domain (LIM 3) domain to endocytic codes of INSR, but not with those of IGF1R, LDLR, TFRC, or EGFR. Interacts with various PKC isoforms through the LIM zinc-binding domains. Binds to RET in a phosphorylation-independent manner via its LIM zinc-binding 2 domain (LIM 2). Probably part of a complex with SHC and the RET dimer. Interacts with TPM2, TBX4 and TBX5. Interacts (via LIM domains) with SIPA1L1. Expressed in kidney, heart, brain, lung, and skeletal muscle. Overexpression results in the synthesis of an unidentified soluble factor which acts on cells in the osteoblast lineage causing them to differentiate and secrete BMP-2.

It is found in the cytoplasm. The protein localises to the cytoskeleton. In terms of biological role, may function as a scaffold on which the coordinated assembly of proteins can occur. May play a role as an adapter that, via its PDZ domain, localizes LIM-binding proteins to actin filaments of both skeletal muscle and nonmuscle tissues. Involved in both of the two fundamental mechanisms of bone formation, direct bone formation (e.g. embryonic flat bones mandible and cranium), and endochondral bone formation (e.g. embryonic long bone development). Plays a role during fracture repair. Involved in BMP6 signaling pathway. This Rattus norvegicus (Rat) protein is PDZ and LIM domain protein 7 (Pdlim7).